The sequence spans 134 residues: MEGFKRYVEVGRVVLVTKGEYTGKLAVIVDIVDHKRALIDSPCSEFPRQVIRYGSVVLTHIVMKLPRGARSGIVAKKWKAQDVCNKWASSAWAKKLEAKKVRSQLNDFDRFAVMRLKKQRREQVNVAVAKALKA.

It belongs to the eukaryotic ribosomal protein eL14 family. As to quaternary structure, component of the large ribosomal subunit (LSU). Mature yeast ribosomes consist of a small (40S) and a large (60S) subunit. The 40S small subunit contains 1 molecule of ribosomal RNA (18S rRNA) and at least 33 different proteins. The large 60S subunit contains 3 rRNA molecules (25S, 5.8S and 5S rRNA) and at least 46 different proteins.

The protein resides in the cytoplasm. It localises to the nucleus. In terms of biological role, component of the ribosome, a large ribonucleoprotein complex responsible for the synthesis of proteins in the cell. The small ribosomal subunit (SSU) binds messenger RNAs (mRNAs) and translates the encoded message by selecting cognate aminoacyl-transfer RNA (tRNA) molecules. The large subunit (LSU) contains the ribosomal catalytic site termed the peptidyl transferase center (PTC), which catalyzes the formation of peptide bonds, thereby polymerizing the amino acids delivered by tRNAs into a polypeptide chain. The nascent polypeptides leave the ribosome through a tunnel in the LSU and interact with protein factors that function in enzymatic processing, targeting, and the membrane insertion of nascent chains at the exit of the ribosomal tunnel. The chain is Large ribosomal subunit protein eL14 (rpl14) from Schizosaccharomyces pombe (strain 972 / ATCC 24843) (Fission yeast).